The sequence spans 505 residues: MSEQQAQGTDAVVDLNNELKTRREKLAALREQGIPFPNDFRRDHTSDQLHADFDAKENEELEALNVEVSVAGRMMTRRIMGKASFVTLQDVGGRIQLYVSRDDLPEGIYNEQFKKWDLGDILGAKGKLFKTKTGELSIHCTELRLLTKALRPLPDKFHGLQDQEARYRQRYLDLISNDESRKTFKIRSQIMAGIRQFMVGRDFMEVETPMMQVIPGGASARPFVTHHNALDLDMYLRIAPELYLKRLVVGGFERVFEINRNFRNEGISVRHNPEFTMMELYMAYADYKDLIELTESLFRTLAQNILGTTEVPYGDEVFDFGKPFVKLTMREAIKKYRPETEMADLDNYDSAKAIAESIGIKVEKSWGQGRIVTEIFEEVAEAHLIQPTFITEYPAEVSPLARRNDENPEITDRFEFFIGGREIGNGFSELNDAQDQAQRFQDQVDAKAAGDDEAMFFDEDYVTALEHGLPPTAGLGIGIDRMVMLFTNSHTIRDVILFPAMRPVK.

2 residues coordinate Mg(2+): Glu-415 and Glu-422.

Belongs to the class-II aminoacyl-tRNA synthetase family. As to quaternary structure, homodimer. Mg(2+) is required as a cofactor.

The protein resides in the cytoplasm. It carries out the reaction tRNA(Lys) + L-lysine + ATP = L-lysyl-tRNA(Lys) + AMP + diphosphate. The protein is Lysine--tRNA ligase of Enterobacter sp. (strain 638).